A 457-amino-acid polypeptide reads, in one-letter code: Acetylcholine receptor subunit alpha (457 aa).

Residues 1–20 (MELTAVLLLLGLCSAGTVLG) form the signal peptide. The Extracellular segment spans residues 21 to 230 (SEHETRLVAK…ITYHFVMQRL (210 aa)). 2 disulfides stabilise this stretch: cysteine 148–cysteine 162 and cysteine 212–cysteine 213. Residue asparagine 161 is glycosylated (N-linked (GlcNAc...) asparagine). 3 helical membrane passes run 231 to 255 (PLYF…VFYL), 263 to 281 (MTLS…LVIV), and 297 to 316 (YMLF…VIVI). Topologically, residues 317 to 428 (NTHHRSPSTH…WKYVAMVMDH (112 aa)) are cytoplasmic. A helical transmembrane segment spans residues 429–447 (ILLGVFMLVCLIGTLAVFA).

Belongs to the ligand-gated ion channel (TC 1.A.9) family. Acetylcholine receptor (TC 1.A.9.1) subfamily. Alpha-1/CHRNA1 sub-subfamily. In terms of assembly, one of the alpha chains that assemble within the acetylcholine receptor, a pentamer of two alpha chains, a beta, a delta, and a gamma (in immature muscle) or epsilon (in mature muscle) chains. The muscle heteropentamer composed of alpha-1, beta-1, delta, epsilon subunits interacts with the alpha-conotoxin ImII.

It is found in the postsynaptic cell membrane. Its subcellular location is the cell membrane. It carries out the reaction K(+)(in) = K(+)(out). The catalysed reaction is Na(+)(in) = Na(+)(out). In terms of biological role, upon acetylcholine binding, the AChR responds by an extensive change in conformation that affects all subunits and leads to opening of an ion-conducting channel across the plasma membrane. This Rattus norvegicus (Rat) protein is Acetylcholine receptor subunit alpha (Chrna1).